Consider the following 327-residue polypeptide: uncharacterized protein (327 aa).

A helical transmembrane segment spans residues 266 to 285 (IGLLAAGSVALTSLCHLLCY). The segment at 297 to 327 (EEENEAAEETAAGEASAVAAAAVSEEEQQRE) is disordered. Positions 305–319 (ETAAGEASAVAAAAV) are enriched in low complexity.

It belongs to the HHV-5 UL14 protein family.

It is found in the host membrane. This is an uncharacterized protein from Human cytomegalovirus (strain Merlin) (HHV-5).